The following is an 85-amino-acid chain: ATP synthase subunit c (85 aa).

The next 2 helical transmembrane spans lie at 10–30 and 53–73; these read IAVA…FAVL and FIIA…ALLF.

Belongs to the ATPase C chain family. In terms of assembly, F-type ATPases have 2 components, F(1) - the catalytic core - and F(0) - the membrane proton channel. F(1) has five subunits: alpha(3), beta(3), gamma(1), delta(1), epsilon(1). F(0) has three main subunits: a(1), b(2) and c(10-14). The alpha and beta chains form an alternating ring which encloses part of the gamma chain. F(1) is attached to F(0) by a central stalk formed by the gamma and epsilon chains, while a peripheral stalk is formed by the delta and b chains.

It localises to the cell inner membrane. Its function is as follows. F(1)F(0) ATP synthase produces ATP from ADP in the presence of a proton or sodium gradient. F-type ATPases consist of two structural domains, F(1) containing the extramembraneous catalytic core and F(0) containing the membrane proton channel, linked together by a central stalk and a peripheral stalk. During catalysis, ATP synthesis in the catalytic domain of F(1) is coupled via a rotary mechanism of the central stalk subunits to proton translocation. In terms of biological role, key component of the F(0) channel; it plays a direct role in translocation across the membrane. A homomeric c-ring of between 10-14 subunits forms the central stalk rotor element with the F(1) delta and epsilon subunits. This is ATP synthase subunit c from Vibrio cholerae serotype O1 (strain ATCC 39315 / El Tor Inaba N16961).